A 418-amino-acid polypeptide reads, in one-letter code: MTLLALGINHKTAPVSLRERVSFSPDKLDQALDSLLAQPMVQGGVVLSTCNRTELYLSVEEQDNLQEALIRWLCDYHNLNEEDLRKSLYWHQDNDAVSHLMRVASGLDSLVLGEPQILGQVKKAFADSQKGHMKASELERMFQKSFSVAKRVRTETDIGASAVSVAFAACTLARQIFESLSTVTVLLVGAGETIELVARHLREHKVQKMIIANRTRERAQILADEVGAEVIALSDIDERLREADIIISSTASPLPIIGKGMVERALKSRRNQPMLLVDIAVPRDVEPEVGKLANAYLYSVDDLQSIISHNLAQRKAAAVEAETIVAQETSEFMAWLRAQSASETIREYRSQAEQVRDELTAKALAALEQGGDAQAIMQDLAWKLTNRLIHAPTKSLQQAARDGDNERLNILRDSLGLE.

Substrate contacts are provided by residues 49–52 (TCNR), serine 109, 114–116 (EPQ), and glutamine 120. Cysteine 50 (nucleophile) is an active-site residue. 189–194 (GAGETI) lines the NADP(+) pocket.

The protein belongs to the glutamyl-tRNA reductase family. As to quaternary structure, homodimer.

The catalysed reaction is (S)-4-amino-5-oxopentanoate + tRNA(Glu) + NADP(+) = L-glutamyl-tRNA(Glu) + NADPH + H(+). Its pathway is porphyrin-containing compound metabolism; protoporphyrin-IX biosynthesis; 5-aminolevulinate from L-glutamyl-tRNA(Glu): step 1/2. Catalyzes the NADPH-dependent reduction of glutamyl-tRNA(Glu) to glutamate 1-semialdehyde (GSA). In Escherichia coli O157:H7, this protein is Glutamyl-tRNA reductase.